We begin with the raw amino-acid sequence, 853 residues long: Replication protein A 70 kDa DNA-binding subunit C (853 aa).

The tract at residues 118 to 282 (PKEPGHSSIN…QSAYQPQQPP (165 aa)) is disordered. 6 stretches are compositionally biased toward polar residues: residues 124 to 144 (SSIN…SEQQ), 159 to 173 (SANS…NSSD), 180 to 194 (SANS…SSSD), 201 to 211 (SANSPQRQVVH), 222 to 249 (PQVS…SSNA), and 263 to 278 (TATT…AYQP). The OB DNA-binding region spans 312 to 399 (WTIKVRVTSK…NDYEIHLDSA (88 aa)). Residues 602–628 (CPIMNGDRPCSKKVTNNGDGTWRCEKC) form a C4-type zinc finger.

This sequence belongs to the replication factor A protein 1 family. As to quaternary structure, heterotrimer of RPA1, RPA2 and RPA3 (canonical replication protein A complex).

It is found in the nucleus. In terms of biological role, component of the replication protein A complex (RPA) required for DNA recombination, repair and replication. The activity of RPA is mediated by single-stranded DNA binding and protein interactions. Probably involved in repair of double-strand DNA breaks (DSBs) induced by genotoxic stresses. This Arabidopsis thaliana (Mouse-ear cress) protein is Replication protein A 70 kDa DNA-binding subunit C (RPA1C).